The primary structure comprises 354 residues: Protein Wnt-9a (354 aa).

The N-terminal stretch at 1 to 15 is a signal peptide; sequence MALLRALLGLLACTP. 5 cysteine pairs are disulfide-bonded: Cys85-Cys96, Cys133-Cys141, Cys143-Cys160, Cys207-Cys221, and Cys209-Cys216. Asn95 is a glycosylation site (N-linked (GlcNAc...) asparagine). Ser213 is lipidated: O-palmitoleoyl serine; by PORCN. The segment at 246 to 271 is disordered; it reads GSTTNEATGEGDISPPKKSIPGHSDQ. Cystine bridges form between Cys288–Cys313, Cys302–Cys308, Cys312–Cys352, Cys328–Cys343, Cys330–Cys340, and Cys335–Cys336.

This sequence belongs to the Wnt family. Palmitoleoylation is required for efficient binding to frizzled receptors. Depalmitoleoylation leads to Wnt signaling pathway inhibition.

Its subcellular location is the secreted. It is found in the extracellular space. The protein resides in the extracellular matrix. Ligand for members of the frizzled family of seven transmembrane receptors. Functions in the canonical Wnt/beta-catenin signaling pathway. Plays a role in embryonic chondrocyte maturation and in embryonic bone mineralization. The protein is Protein Wnt-9a (WNT9A) of Gallus gallus (Chicken).